The sequence spans 395 residues: ATP phosphoribosyltransferase regulatory subunit (395 aa).

This sequence belongs to the class-II aminoacyl-tRNA synthetase family. HisZ subfamily. Heteromultimer composed of HisG and HisZ subunits.

It localises to the cytoplasm. Its pathway is amino-acid biosynthesis; L-histidine biosynthesis; L-histidine from 5-phospho-alpha-D-ribose 1-diphosphate: step 1/9. Required for the first step of histidine biosynthesis. May allow the feedback regulation of ATP phosphoribosyltransferase activity by histidine. This is ATP phosphoribosyltransferase regulatory subunit from Pseudomonas entomophila (strain L48).